Consider the following 119-residue polypeptide: Beta-2-microglobulin (119 aa).

The first 20 residues, 1–20, serve as a signal peptide directing secretion; that stretch reads MARFVVVALLVLLSLSGLEA. In terms of domain architecture, Ig-like C1-type spans 25-114; the sequence is PKIQVYSRHP…VTFSTPKTVK (90 aa). An intrachain disulfide couples C45 to C100.

The protein belongs to the beta-2-microglobulin family. As to quaternary structure, heterodimer of an alpha chain and a beta chain. Beta-2-microglobulin is the beta-chain of major histocompatibility complex class I molecules.

The protein localises to the secreted. In terms of biological role, component of the class I major histocompatibility complex (MHC). Involved in the presentation of peptide antigens to the immune system. The polypeptide is Beta-2-microglobulin (B2M) (Callimico goeldii (Goeldi's marmoset)).